The primary structure comprises 363 residues: tRNA dimethylallyltransferase (363 aa).

Residue 65 to 72 (GPTASGKS) coordinates ATP. Residue 67–72 (TASGKS) coordinates substrate. Interaction with substrate tRNA stretches follow at residues 90-93 (DSMQ) and 214-218 (QRLIR).

This sequence belongs to the IPP transferase family. As to quaternary structure, monomer. Mg(2+) is required as a cofactor.

The catalysed reaction is adenosine(37) in tRNA + dimethylallyl diphosphate = N(6)-dimethylallyladenosine(37) in tRNA + diphosphate. Its function is as follows. Catalyzes the transfer of a dimethylallyl group onto the adenine at position 37 in tRNAs that read codons beginning with uridine, leading to the formation of N6-(dimethylallyl)adenosine (i(6)A). In Rickettsia massiliae (strain Mtu5), this protein is tRNA dimethylallyltransferase.